Consider the following 717-residue polypeptide: Patatin-like phospholipase domain-containing protein PGUG_03164 (717 aa).

Residues 123 to 143 (WPFLIIITVWILLLCILYTVV) traverse the membrane as a helical segment. The PNPLA domain occupies 298–490 (LCLSGGACFA…RTDIPIDALK (193 aa)). The GXSXG signature appears at 329-333 (GTSGG). Ser-331 (nucleophile) is an active-site residue. Residue Asp-477 is the Proton acceptor of the active site. The segment at 680–717 (YDSESSAEETLSPGFSQGTHAVLTDESDDDSSDDEIDD) is disordered. Residues 704-717 (DESDDDSSDDEIDD) show a composition bias toward acidic residues.

This sequence belongs to the PLPL family.

It is found in the membrane. Functionally, probable lipid hydrolase. The polypeptide is Patatin-like phospholipase domain-containing protein PGUG_03164 (Meyerozyma guilliermondii (strain ATCC 6260 / CBS 566 / DSM 6381 / JCM 1539 / NBRC 10279 / NRRL Y-324) (Yeast)).